Consider the following 1321-residue polypeptide: Bile salt export pump (1321 aa).

The Cytoplasmic segment spans residues Met1 to Met62. Positions Glu16–Glu37 are disordered. Residues Glu21–Glu37 are compositionally biased toward basic and acidic residues. Residues Met62–Thr385 form the ABC transmembrane type-1 1 domain. The chain crosses the membrane as a helical span at residues Phe63–Phe83. At Gly84–Gly147 the chain is on the extracellular side. N-linked (GlcNAc...) asparagine glycosylation is found at Asn109, Asn116, Asn122, and Asn125. A helical transmembrane segment spans residues Ile148–Ala168. The Cytoplasmic segment spans residues Arg169–Asp215. The chain crosses the membrane as a helical span at residues Gln216 to Phe236. Topologically, residues Arg237–Lys240 are extracellular. The helical transmembrane segment at Leu241–Leu261 threads the bilayer. Residues Ser262 to Gly319 are Cytoplasmic-facing. The chain crosses the membrane as a helical span at residues Ile320 to Ala340. The Extracellular portion of the chain corresponds to Phe341 to Glu353. A helical transmembrane segment spans residues Tyr354–Gly374. Residues Asn375–Met755 lie on the Cytoplasmic side of the membrane. An ABC transporter 1 domain is found at Ile420–Leu656. Gly455 to Ser462 is an ATP binding site. Thr586 bears the Phosphothreonine mark. Ser587 is subject to Phosphoserine. The segment at Phe651 to Ala672 is interaction with HAX1. 3 positions are modified to phosphoserine: Ser690, Ser701, and Ser704. Positions Met755–Lys1043 constitute an ABC transmembrane type-1 2 domain. The chain crosses the membrane as a helical span at residues Leu756–Phe776. At Ser777–Gln794 the chain is on the extracellular side. The chain crosses the membrane as a helical span at residues Ile795–Leu815. The Cytoplasmic portion of the chain corresponds to Gln816–Gln869. The next 2 membrane-spanning stretches (helical) occupy residues Gly870 to Met890 and Ile891 to Leu911. Topologically, residues Ala912–Asn979 are cytoplasmic. Residues Ile980–Tyr1000 traverse the membrane as a helical segment. The Extracellular portion of the chain corresponds to Arg1001–Gly1011. The helical transmembrane segment at Leu1012–Gly1032 threads the bilayer. Topologically, residues Arg1033 to Ser1321 are cytoplasmic. In terms of domain architecture, ABC transporter 2 spans Ile1078–Thr1316. Gly1113 to Ser1120 lines the ATP pocket. Phosphoserine is present on Ser1214. The mediates internalization from the plasma membrane stretch occupies residues Tyr1311 to Val1314. Ser1321 bears the Phosphoserine mark.

The protein belongs to the ABC transporter superfamily. ABCB family. Multidrug resistance exporter (TC 3.A.1.201) subfamily. As to quaternary structure, interacts with HAX1. Interacts with the adapter protein complex 2 (AP-2) throught AP2A2 or AP2A1; this interaction regulates cell membrane expression of ABCB11 through its internalization in a clathrin-dependent manner and its subsequent degradation. N-glycosylated. Post-translationally, ubiquitinated; short-chain ubiquitination regulates cell-Surface expression of ABCB11. As to expression, expressed predominantly, if not exclusively in the liver, where it was further localized to the canalicular microvilli and to subcanalicular vesicles of the hepatocytes by in situ.

The protein resides in the apical cell membrane. It is found in the recycling endosome membrane. It localises to the endosome. Its subcellular location is the cell membrane. The enzyme catalyses cholate(in) + ATP + H2O = cholate(out) + ADP + phosphate + H(+). It catalyses the reaction taurocholate(in) + ATP + H2O = taurocholate(out) + ADP + phosphate + H(+). It carries out the reaction glycocholate(in) + ATP + H2O = glycocholate(out) + ADP + phosphate + H(+). The catalysed reaction is glycochenodeoxycholate(in) + ATP + H2O = glycochenodeoxycholate(out) + ADP + phosphate + H(+). The enzyme catalyses taurochenodeoxycholate(in) + ATP + H2O = taurochenodeoxycholate(out) + ADP + phosphate + H(+). It catalyses the reaction glycoursodeoxycholate(in) + ATP + H2O = glycoursodeoxycholate(out) + ADP + phosphate + H(+). It carries out the reaction tauroursodeoxycholate(in) + ATP + H2O = tauroursodeoxycholate(out) + ADP + phosphate + H(+). The catalysed reaction is taurodeoxycholate(in) + ATP + H2O = taurodeoxycholate(out) + ADP + phosphate + H(+). The enzyme catalyses taurolithocholate 3-sulfate(in) + ATP + H2O = taurolithocholate 3-sulfate(out) + ADP + phosphate + H(+). It catalyses the reaction pravastatin(in) + ATP + H2O = pravastatin(out) + ADP + phosphate + H(+). With respect to regulation, the uptake of taurocholate is inhibited by taurolithocholate sulfate with an IC(50) of 9 uM. Pravastatin competitively inhibits the transport of taurocholic acid. Cyclosporin A, glibenclamide, rifampicin and troglitazonestrongly competitively inhibit the transport activity of taurocholate. The canalicular transport activity of taurocholate is strongly dependent on canalicular membrane cholesterol content. The uptake of taurocholate is increased by short- and medium-chain fatty acids. Cholesterol increases transport capacity of taurocholate without affecting the affinity for the substrate. Catalyzes the transport of the major hydrophobic bile salts, such as taurine and glycine-conjugated cholic acid across the canalicular membrane of hepatocytes in an ATP-dependent manner, therefore participates in hepatic bile acid homeostasis and consequently to lipid homeostasis through regulation of biliary lipid secretion in a bile salts dependent manner. Transports taurine-conjugated bile salts more rapidly than glycine-conjugated bile salts. Also transports non-bile acid compounds, such as pravastatin and fexofenadine in an ATP-dependent manner and may be involved in their biliary excretion. This is Bile salt export pump from Homo sapiens (Human).